The chain runs to 161 residues: Vitamin K-dependent protein C (161 aa).

The Peptidase S1 domain occupies 1 to 161 (EKWELDLDIE…GCGLLHNYGV (161 aa)). N17 is a glycosylation site (N-linked (GlcNAc...) asparagine). D26 serves as the catalytic Charge relay system. N82 carries an N-linked (GlcNAc...) asparagine glycan. 2 disulfide bridges follow: C100-C114 and C125-C153. The Charge relay system role is filled by S129.

It belongs to the peptidase S1 family. In terms of tissue distribution, plasma; synthesized in the liver.

It is found in the secreted. The protein resides in the golgi apparatus. The protein localises to the endoplasmic reticulum. The catalysed reaction is Degradation of blood coagulation factors Va and VIIIa.. In terms of biological role, protein C is a vitamin K-dependent serine protease that regulates blood coagulation by inactivating factors Va and VIIIa in the presence of calcium ions and phospholipids. Exerts a protective effect on the endothelial cell barrier function. The polypeptide is Vitamin K-dependent protein C (PROC) (Macaca mulatta (Rhesus macaque)).